We begin with the raw amino-acid sequence, 703 residues long: Pentatricopeptide repeat-containing protein At1g22830 (703 aa).

PPR repeat units follow at residues 82–116 (VLYSSASLLSTCVGFNEFVPGQQLHAHCISSGLEF), 117–147 (DSVLVPKLVTFYSAFNLLDEAQTITENSEIL), 148–182 (HPLPWNVLIGSYIRNKRFQESVSVYKRMMSKGIRA), 183–217 (DEFTYPSVIKACAALLDFAYGRVVHGSIEVSSHRC), 218–248 (NLYVCNALISMYKRFGKVDVARRLFDRMSER), 249–283 (DAVSWNAIINCYTSEEKLGEAFKLLDRMYLSGVEA), 284–318 (SIVTWNTIAGGCLEAGNYIGALNCVVGMRNCNVRI), 319–353 (GSVAMINGLKACSHIGALKWGKVFHCLVIRSCSFS), 356–386 (IDNVRNSLITMYSRCSDLRHAFIVFQQVEAN), 387–421 (SLSTWNSIISGFAYNERSEETSFLLKEMLLSGFHP), 422–452 (NHITLASILPLFARVGNLQHGKEFHCYILRR), 458–488 (CLILWNSLVDMYAKSGEIIAAKRVFDSMRKR), 489–523 (DKVTYTSLIDGYGRLGKGEVALAWFKDMDRSGIKP), 524–554 (DHVTMVAVLSACSHSNLVREGHWLFTKMEHV), and 560–594 (RLEHYSCMVDLYCRAGYLDKARDIFHTIPYEPSSA). The type E motif stretch occupies residues 595–671 (MCATLLKACL…AHEFALMETD (77 aa)). Positions 671–703 (DSELDGENNKPMNDDSVINQEQSSDEERLVEVG) are disordered.

It belongs to the PPR family. PCMP-E subfamily.

The sequence is that of Pentatricopeptide repeat-containing protein At1g22830 (PCMP-E24) from Arabidopsis thaliana (Mouse-ear cress).